Reading from the N-terminus, the 89-residue chain is uncharacterized protein (89 aa).

2 consecutive transmembrane segments (helical) span residues 11–31 (IFGAVILVSMIGALVAEPIAL) and 63–83 (AAISAALGPAGLASGVFTVVF).

The protein localises to the cell membrane. This is an uncharacterized protein from Methanocaldococcus jannaschii (strain ATCC 43067 / DSM 2661 / JAL-1 / JCM 10045 / NBRC 100440) (Methanococcus jannaschii).